A 38-amino-acid chain; its full sequence is Large ribosomal subunit protein bL36 (38 aa).

The protein belongs to the bacterial ribosomal protein bL36 family.

The sequence is that of Large ribosomal subunit protein bL36 from Acholeplasma laidlawii (strain PG-8A).